The sequence spans 65 residues: Large ribosomal subunit protein bL28 (65 aa).

Residues 1–26 (MARRDALTGKSALSGQSRSHALNATK) form a disordered region. Residues 11 to 22 (SALSGQSRSHAL) show a composition bias toward polar residues.

Belongs to the bacterial ribosomal protein bL28 family.

This is Large ribosomal subunit protein bL28 from Mycoplasma mycoides subsp. mycoides SC (strain CCUG 32753 / NCTC 10114 / PG1).